We begin with the raw amino-acid sequence, 1202 residues long: MGSAALPHARQRWVSHALDSNRKFLIANAQMENCAIIYCNDGFCEMFGYSRVEVMQRPCTCDFLTGPDTTKSSIAQLTQALLGSEECKLEILYYRKDTSCFRCLVDVVPVKNEDGVVIMFILNFEDLAQLIAKSSGRSLHHRLSQSWRAGEGRRLKFSLPSLRRLKAQRNSLPTSEFDGVAIDYGKPGGDSLILRDLKTSPKENCVQSETESLLEKERRPSLEADPTLQHPIPKQEPPSLGPRGSYSAWGFIRSRPGGSFHSLRRVSSLDNFEAARSEFQRKFRERRANSEGGMGLSGKASHVKPNPPNSTSDSDLMKYRTISQIPQFTLNFVEFNLEKHRSGSTTEIEIIAPHKVTERTQNVTEKVTQVLSLGADVLPEYKLQAPRIHRWTILHYSPFKAVWDWLILLLVIYTAVFTPYSAAFLLNEEQGEEKHWNCSYSCDPLNIIDLIVDIMFIVDIVINFRTTYVNINDEVVSHPGKIAIHYFKGWFLIDMVAAIPFDLLIFRSGSDETTTLIGLLKTARLLRLVRVARKLDRYSEYGAAVLFLLMCTFALIAHWLACIWYAIGNVERPYMEHKIGWLDNLGDQIGKRYNDSDLSSGPSIKDKYVTALYFTFSSLTSVGFGNVSPNTNSEKIFSICVMLIGSLMYASIFGNVSAIIQRLYSGTARYHTQMLRVKEFIRFHQIPNPLRQRLEEYFQHAWSYTNGIDMNAVLKGFPDCLQADICLHLNRTLLQNCKAFRGASKGCLRALAMKFKTTHAPPGDTLVHYGDVLTTLYFISRGSIEILKEDIVVAILGKNDIFGEPISLYARPGKSNADVRALTYCDLHKIQREDLLEVLDMYPAFSDNFWSNLEITFNLRDADSVPRTPLSEEYDCTYRRVRRRKHSLCQPNKPDPDTGTSDAEQYHTYSELTNPQDPLSKDQWDDVGSSTTPCSQTSDDEAKPGSPTKALSLVTASASGTEVSKQAAESSQSYAGTHICTTPLDIPNMFTFWEDQRPNHHPEPLQHVSLVHSSRDIPLHSDYRPGQIESRLELLQAQLSRLESRMSSDINIILQLLQRQLSQVPPAYSPISPSSHNLAMYGIVPRSLEPLTPCAPLEDEQQTAPGQSPSYAEVEKFHLKSRHSLSSGMHLTVASDETMTVYSEQEHHSPPLLNPEPPHQRAPNTQGLLRGSRFPSLPEHLEASSEHQDIQRHLSDPVLPGS.

The Cytoplasmic segment spans residues 1 to 405; that stretch reads MGSAALPHAR…YSPFKAVWDW (405 aa). Residues 36–84 form the PAS domain; it reads IIYCNDGFCEMFGYSRVEVMQRPCTCDFLTGPDTTKSSIAQLTQALLGS. The 53-residue stretch at 87–139 folds into the PAC domain; that stretch reads CKLEILYYRKDTSCFRCLVDVVPVKNEDGVVIMFILNFEDLAQLIAKSSGRSL. Disordered stretches follow at residues 203–243 and 285–315; these read ENCV…LGPR and ERRA…SDSD. Positions 213–222 are enriched in basic and acidic residues; it reads LLEKERRPSL. Residues 406-426 form a helical membrane-spanning segment; sequence LILLLVIYTAVFTPYSAAFLL. Over 427–443 the chain is Extracellular; sequence NEEQGEEKHWNCSYSCD. N-linked (GlcNAc...) asparagine glycosylation occurs at Asn-437. Residues 444 to 464 form a helical membrane-spanning segment; sequence PLNIIDLIVDIMFIVDIVINF. The Cytoplasmic segment spans residues 465 to 485; sequence RTTYVNINDEVVSHPGKIAIH. A helical transmembrane segment spans residues 486–506; that stretch reads YFKGWFLIDMVAAIPFDLLIF. The Extracellular segment spans residues 507–515; that stretch reads RSGSDETTT. A helical; Voltage-sensor transmembrane segment spans residues 516 to 536; the sequence is LIGLLKTARLLRLVRVARKLD. The Cytoplasmic portion of the chain corresponds to 537–543; sequence RYSEYGA. Residues 544 to 564 traverse the membrane as a helical segment; sequence AVLFLLMCTFALIAHWLACIW. Residues 565-608 are Extracellular-facing; sequence YAIGNVERPYMEHKIGWLDNLGDQIGKRYNDSDLSSGPSIKDKY. The N-linked (GlcNAc...) asparagine glycan is linked to Asn-594. The segment at residues 609 to 629 is an intramembrane region (pore-forming); it reads VTALYFTFSSLTSVGFGNVSP. A Selectivity filter motif is present at residues 621–626; it reads SVGFGN. At 630 to 635 the chain is on the extracellular side; it reads NTNSEK. The helical transmembrane segment at 636 to 656 threads the bilayer; it reads IFSICVMLIGSLMYASIFGNV. Topologically, residues 657–1202 are cytoplasmic; the sequence is SAIIQRLYSG…HLSDPVLPGS (546 aa). The segment at 739-839 is cNMP-binding domain; it reads AFRGASKGCL…IQREDLLEVL (101 aa). 3 disordered regions span residues 912–948, 1092–1112, and 1140–1202; these read LTNP…GSPT, TPCA…PSYA, and TVYS…LPGS. Residues 928 to 937 are compositionally biased toward polar residues; the sequence is GSSTTPCSQT. Over residues 1179 to 1195 the composition is skewed to basic and acidic residues; sequence EHLEASSEHQDIQRHLS.

It belongs to the potassium channel family. H (Eag) (TC 1.A.1.20) subfamily. Kv11.2/KCNH6 sub-subfamily. In terms of assembly, the potassium channel is probably composed of a homo- or heterotetrameric complex of pore-forming alpha subunits that can associate only within their subfamily.

The protein localises to the cell membrane. The enzyme catalyses K(+)(in) = K(+)(out). Pore-forming (alpha) subunit of voltage-gated inwardly rectifying potassium channel. Characterized by unusual gating kinetics by producing relatively small outward currents during membrane depolarization and large inward currents during subsequent repolarization which reflect a rapid inactivation during depolarization and quick recovery from inactivation but slow deactivation (closing) during repolarization. Activates even more slowly than KCNH2. This chain is Voltage-gated inwardly rectifying potassium channel KCNH6, found in Gallus gallus (Chicken).